We begin with the raw amino-acid sequence, 270 residues long: Phosphatidylglycerol--prolipoprotein diacylglyceryl transferase (270 aa).

4 consecutive transmembrane segments (helical) span residues 18–38 (ITIYWYGVIIGTGVLIGLWLA), 55–75 (LVLFAVPIAIVCARAYYVLFE), 90–110 (WQGGLAIHGGLIGAVATGAVF), and 115–135 (GLSFWKLADIAAPSIILGQAI). Arg-137 contributes to the a 1,2-diacyl-sn-glycero-3-phospho-(1'-sn-glycerol) binding site. Helical transmembrane passes span 177–197 (HPTFLYESLWNLVGFFLLLWL), 205–225 (GELFLSYLIWYSVGRFWIEGM), and 236–256 (LRAAQVVSVTLIVLSIALWIV).

This sequence belongs to the Lgt family.

It localises to the cell membrane. It carries out the reaction L-cysteinyl-[prolipoprotein] + a 1,2-diacyl-sn-glycero-3-phospho-(1'-sn-glycerol) = an S-1,2-diacyl-sn-glyceryl-L-cysteinyl-[prolipoprotein] + sn-glycerol 1-phosphate + H(+). It functions in the pathway protein modification; lipoprotein biosynthesis (diacylglyceryl transfer). In terms of biological role, catalyzes the transfer of the diacylglyceryl group from phosphatidylglycerol to the sulfhydryl group of the N-terminal cysteine of a prolipoprotein, the first step in the formation of mature lipoproteins. This is Phosphatidylglycerol--prolipoprotein diacylglyceryl transferase from Geobacillus kaustophilus (strain HTA426).